The primary structure comprises 208 residues: Small ribosomal subunit protein uS4 (208 aa).

The S4 RNA-binding domain occupies 98–161 (RRLDNVVYRL…KASPRIKELV (64 aa)).

This sequence belongs to the universal ribosomal protein uS4 family. Part of the 30S ribosomal subunit. Contacts protein S5. The interaction surface between S4 and S5 is involved in control of translational fidelity.

Its function is as follows. One of the primary rRNA binding proteins, it binds directly to 16S rRNA where it nucleates assembly of the body of the 30S subunit. Functionally, with S5 and S12 plays an important role in translational accuracy. In Desulforamulus reducens (strain ATCC BAA-1160 / DSM 100696 / MI-1) (Desulfotomaculum reducens), this protein is Small ribosomal subunit protein uS4.